Consider the following 950-residue polypeptide: MLLLGILTLAFAGRTAGGSEPEREVVVPIRLDPDINGRRYYWRGPEDSGDQGLIFQITAFQEDFYLHLTPDAQFLAPAFSTEHLGVPLQGLTGGSSDLRRCFYSGDVNAEPDSFAAVSLCGGLRGAFGYRGAEYVISPLPNASAPAAQRNSQGAHLLQRRGVPGGPSGDPTSRCGVASGWNPAILRALDPYKPRRAGFGESRSRRRSGRAKRFVSIPRYVETLVVADESMVKFHGADLEHYLLTLLATAARLYRHPSILNPINIVVVKVLLLRDRDSGPKVTGNAALTLRNFCAWQKKLNKVSDKHPEYWDTAILFTRQDLCGATTCDTLGMADVGTMCDPKRSCSVIEDDGLPSAFTTAHELGHVFNMPHDNVKVCEEVFGKLRANHMMSPTLIQIDRANPWSACSAAIITDFLDSGHGDCLLDQPSKPISLPEDLPGASYTLSQQCELAFGVGSKPCPYMQYCTKLWCTGKAKGQMVCQTRHFPWADGTSCGEGKLCLKGACVERHNLNKHRVDGSWAKWDPYGPCSRTCGGGVQLARRQCTNPTPANGGKYCEGVRVKYRSCNLEPCPSSASGKSFREEQCEAFNGYNHSTNRLTLAVAWVPKYSGVSPRDKCKLICRANGTGYFYVLAPKVVDGTLCSPDSTSVCVQGKCIKAGCDGNLGSKKRFDKCGVCGGDNKSCKKVTGLFTKPMHGYNFVVAIPAGASSIDIRQRGYKGLIGDDNYLALKNSQGKYLLNGHFVVSAVERDLVVKGSLLRYSGTGTAVESLQASRPILEPLTVEVLSVGKMTPPRVRYSFYLPKEPREDKSSHPKDPRGPSVLHNSVLSLSNQVEQPDDRPPARWVAGSWGPCSASCGSGLQKRAVDCRGSAGQRTVPACDAAHRPVETQACGEPCPTWELSAWSPCSKSCGRGFQRRSLKCVGHGGRLLARDQCNLHRKPQELDFCVLRPC.

Positions 1–17 are cleaved as a signal peptide; the sequence is MLLLGILTLAFAGRTAG. Residues 18 to 212 constitute a propeptide that is removed on maturation; sequence GSEPEREVVV…SRRRSGRAKR (195 aa). N-linked (GlcNAc...) asparagine glycosylation is present at N141. Residues 151–172 are disordered; the sequence is SQGAHLLQRRGVPGGPSGDPTS. A Cysteine switch motif is present at residues 172–179; that stretch reads SRCGVASG. C174 is a Zn(2+) binding site. Residues 218-427 enclose the Peptidase M12B domain; sequence RYVETLVVAD…GHGDCLLDQP (210 aa). 11 disulfides stabilise this stretch: C293–C345, C322–C327, C339–C422, C377–C406, C448–C470, C459–C480, C465–C499, C493–C504, C528–C565, C532–C570, and C543–C555. H361 lines the Zn(2+) pocket. Residue E362 is part of the active site. Zn(2+) is bound by residues H365 and H371. A Disintegrin domain is found at 428 to 515; that stretch reads SKPISLPEDL…ERHNLNKHRV (88 aa). In terms of domain architecture, TSP type-1 1 spans 516–571; sequence DGSWAKWDPYGPCSRTCGGGVQLARRQCTNPTPANGGKYCEGVRVKYRSCNLEPCP. N591, N623, and N679 each carry an N-linked (GlcNAc...) asparagine glycan. The segment at 701–838 is spacer; that stretch reads AIPAGASSID…SNQVEQPDDR (138 aa). Residues 798 to 822 form a disordered region; it reads FYLPKEPREDKSSHPKDPRGPSVLH. Residues 802 to 816 are compositionally biased toward basic and acidic residues; it reads KEPREDKSSHPKDPR. TSP type-1 domains are found at residues 839–895 and 896–949; these read PPAR…EPCP and TWEL…VLRP.

Requires Zn(2+) as cofactor. In terms of processing, the precursor is cleaved by a furin endopeptidase. Glycosylated. Can be O-fucosylated by POFUT2 on a serine or a threonine residue found within the consensus sequence C1-X(2)-(S/T)-C2-G of the TSP type-1 repeat domains where C1 and C2 are the first and second cysteine residue of the repeat, respectively. Fucosylated repeats can then be further glycosylated by the addition of a beta-1,3-glucose residue by the glucosyltransferase, B3GALTL. Fucosylation mediates the efficient secretion of ADAMTS family members. Can be C-glycosylated with one or two mannose molecules on tryptophan residues within the consensus sequence W-X-X-W of the TPRs. Also N-glycosylated. These other glycosylations can also facilitate secretion. In terms of tissue distribution, expressed in fetal liver and kidney, but not in any of the adult tissues examined.

Its subcellular location is the secreted. The protein resides in the extracellular space. The protein localises to the extracellular matrix. It localises to the cell surface. Functionally, metalloprotease which has proteolytic activity against the proteoglycan VCAN, cleaving it at the 'Glu-1428-|-1429-Ala' site. Cleaves VCAN in the pericellular matrix surrounding myoblasts, facilitating myoblast contact and fusion which is required for skeletal muscle development and regeneration. This is A disintegrin and metalloproteinase with thrombospondin motifs 15 (ADAMTS15) from Homo sapiens (Human).